The sequence spans 122 residues: Structural protein p14.5 (122 aa).

Disordered stretches follow at residues 1 to 27 (MADF…LEYD) and 85 to 122 (TSLV…HKSK). Residue A2 is modified to N-acetylalanine; by host. The segment covering 105–122 (KPKKKKHLFPKLSSHKSK) has biased composition (basic residues).

Belongs to the asfivirus structural protein p14.5 family. In terms of assembly, interacts with the major capsid protein. Interacts with host IRF3; this interaction interferes with the recruitment of IRF3 to TBK1. Acetylated.

Its subcellular location is the virion. Functionally, structural protein required for transport of intracellular particles from the assembly sites to the plasma membrane. Binds to both ssDNA and dsDNA. Suppressed the activation of the cGAS/STING pathway by interfering with the recruitment of IRF3 to TBK1, which in turn suppresses IRF3 phosphorylation, decreasing interferon production. The polypeptide is Structural protein p14.5 (African swine fever virus (isolate Tick/Malawi/Lil 20-1/1983) (ASFV)).